The primary structure comprises 602 residues: Elongation factor 4 (602 aa).

Residues 7 to 189 form the tr-type G domain; it reads SRLRNFCIIA…AVVERVPPPK (183 aa). Residues 19 to 24 and 136 to 139 each bind GTP; these read DHGKST and NKVD.

It belongs to the TRAFAC class translation factor GTPase superfamily. Classic translation factor GTPase family. LepA subfamily.

The protein resides in the cell inner membrane. The catalysed reaction is GTP + H2O = GDP + phosphate + H(+). Functionally, required for accurate and efficient protein synthesis under certain stress conditions. May act as a fidelity factor of the translation reaction, by catalyzing a one-codon backward translocation of tRNAs on improperly translocated ribosomes. Back-translocation proceeds from a post-translocation (POST) complex to a pre-translocation (PRE) complex, thus giving elongation factor G a second chance to translocate the tRNAs correctly. Binds to ribosomes in a GTP-dependent manner. This chain is Elongation factor 4, found in Prochlorococcus marinus (strain MIT 9211).